A 230-amino-acid polypeptide reads, in one-letter code: Heptaprenylglyceryl phosphate synthase (230 aa).

Lys-12 is a binding site for sn-glycerol 1-phosphate. Mg(2+) is bound by residues Asp-14 and Thr-40. Sn-glycerol 1-phosphate is bound by residues 159 to 164 (YIEYSG), Gly-189, and 209 to 210 (GD).

The protein belongs to the GGGP/HepGP synthase family. Group I subfamily. In terms of assembly, homodimer. Requires Mg(2+) as cofactor.

It carries out the reaction sn-glycerol 1-phosphate + all-trans-heptaprenyl diphosphate = 3-heptaprenyl-sn-glycero-1-phosphate + diphosphate. It functions in the pathway membrane lipid metabolism; glycerophospholipid metabolism. Functionally, prenyltransferase that catalyzes in vivo the transfer of the heptaprenyl moiety of heptaprenyl pyrophosphate (HepPP; 35 carbon atoms) to the C3 hydroxyl of sn-glycerol-1-phosphate (G1P), producing heptaprenylglyceryl phosphate (HepGP). This reaction is an ether-bond-formation step in the biosynthesis of archaea-type G1P-based membrane lipids found in Bacillales. The chain is Heptaprenylglyceryl phosphate synthase from Staphylococcus aureus (strain MRSA252).